The chain runs to 782 residues: Polyribonucleotide nucleotidyltransferase (782 aa).

Residues Asp514 and Asp520 each coordinate Mg(2+). The KH domain maps to 580 to 639 (PRIITIKIPVDQIGAVIGPKGKIINQIQDDTGAEITIEDDGTIYIGATEGTAAEAARAAI). In terms of domain architecture, S1 motif spans 651–723 (GERYLGTVVK…ARGKLSLVPV (73 aa)). Low complexity predominate over residues 734-753 (AGAGESAASGGAPRSAGGPQ). The segment at 734–782 (AGAGESAASGGAPRSAGGPQPREHQGPGRPRGRGGDHGGEGRQRTRRRH) is disordered. Residues 766–776 (RGGDHGGEGRQ) show a composition bias toward basic and acidic residues.

It belongs to the polyribonucleotide nucleotidyltransferase family. The cofactor is Mg(2+).

Its subcellular location is the cytoplasm. The enzyme catalyses RNA(n+1) + phosphate = RNA(n) + a ribonucleoside 5'-diphosphate. Involved in mRNA degradation. Catalyzes the phosphorolysis of single-stranded polyribonucleotides processively in the 3'- to 5'-direction. This is Polyribonucleotide nucleotidyltransferase from Acidothermus cellulolyticus (strain ATCC 43068 / DSM 8971 / 11B).